We begin with the raw amino-acid sequence, 1726 residues long: Transcription elongation factor SPT6 (1726 aa).

3 stretches are compositionally biased toward acidic residues: residues 1–18, 31–45, and 55–79; these read MSDF…EFEE, EEDE…EDQD, and DDDD…SDSG. 3 disordered regions span residues 1–196, 219–248, and 482–512; these read MSDF…KGKK, AEFD…KKQT, and EVSE…QASR. A Phosphoserine modification is found at Ser90. The segment covering 93–104 has biased composition (acidic residues); sequence DYLDDDDLDLIE. Positions 110–120 are enriched in basic residues; it reads KVKRRKKKYSR. 4 stretches are compositionally biased toward acidic residues: residues 146 to 157, 166 to 186, 219 to 240, and 484 to 501; these read GDGEGEVEDGEA, DEEE…DDDG, AEFD…DDES, and SEED…EEEE. Basic and acidic residues predominate over residues 502 to 512; that stretch reads QKGPDLKQASR. The stretch at 806 to 865 forms a coiled coil; it reads LKRRNAWREDEREKKQQDVENLKKFLLSKKPHVVAVSGENRDAHMVMEDIKRTISELEQN. The region spanning 1204-1273 is the S1 motif domain; the sequence is WNHFDSGSCP…EKFNVDLTCR (70 aa). One can recognise an SH2 domain in the interval 1316-1426; the sequence is YIKRVIAHPS…LLGHKYFHEC (111 aa). Residue Thr1522 is modified to Phosphothreonine. Ser1525 bears the Phosphoserine mark. Positions 1611-1627 are enriched in polar residues; the sequence is LMTPSYSYTTPGQQQAM. Residues 1611–1726 form a disordered region; sequence LMTPSYSYTT…ATPLLDEMDR (116 aa). Composition is skewed to low complexity over residues 1628–1640 and 1647–1656; these read TTPQ…PQSS and SSSTPSSSSS. Over residues 1657–1669 the composition is skewed to polar residues; sequence RVRTPQPKASSHT.

This sequence belongs to the SPT6 family.

The protein resides in the nucleus. In terms of biological role, histone H3-H4 chaperone that plays a role in maintenance of chromatin structure during RNA polymerase II transcription elongation. Promotes the activation of the myogenic gene program by entailing erasure of the repressive H3K27me3 epigenetic mark through stabilization of the chromatin interaction of the H3K27 demethylase KDM6A. Plays an important role during early patterning and somitogenesis of the embryo. The protein is Transcription elongation factor SPT6 (supt6h) of Danio rerio (Zebrafish).